Here is a 293-residue protein sequence, read N- to C-terminus: Probable porphobilinogen deaminase (293 aa).

Cysteine 233 bears the S-(dipyrrolylmethanemethyl)cysteine mark.

Belongs to the HMBS family. It depends on dipyrromethane as a cofactor.

It carries out the reaction 4 porphobilinogen + H2O = hydroxymethylbilane + 4 NH4(+). Its pathway is porphyrin-containing compound metabolism; protoporphyrin-IX biosynthesis; coproporphyrinogen-III from 5-aminolevulinate: step 2/4. In terms of biological role, tetrapolymerization of the monopyrrole PBG into the hydroxymethylbilane pre-uroporphyrinogen in several discrete steps. This chain is Probable porphobilinogen deaminase, found in Saccharolobus islandicus (strain Y.N.15.51 / Yellowstone #2) (Sulfolobus islandicus).